The sequence spans 37 residues: Esculentin-2A (37 aa).

A disulfide bridge links Cys-31 with Cys-37.

Belongs to the frog skin active peptide (FSAP) family. Esculentin subfamily. As to expression, expressed by the skin glands.

The protein localises to the secreted. In terms of biological role, shows antibacterial activity against representative Gram-negative and Gram-positive bacterial species, and hemolytic activity. The sequence is that of Esculentin-2A from Pelophylax lessonae (Pool frog).